A 200-amino-acid polypeptide reads, in one-letter code: Pyridoxine/pyridoxamine 5'-phosphate oxidase (200 aa).

FMN contacts are provided by residues 48–53 (RMVLLK), 63–64 (YT), Lys70, and Gln92. Position 53 (Lys53) interacts with substrate. Substrate-binding residues include Tyr110, Arg114, and Ser118. FMN is bound by residues 127–128 (QS) and Trp171. 177 to 179 (RLH) is a substrate binding site. FMN is bound at residue Arg181.

This sequence belongs to the pyridoxamine 5'-phosphate oxidase family. Homodimer. The cofactor is FMN.

It catalyses the reaction pyridoxamine 5'-phosphate + O2 + H2O = pyridoxal 5'-phosphate + H2O2 + NH4(+). It carries out the reaction pyridoxine 5'-phosphate + O2 = pyridoxal 5'-phosphate + H2O2. The protein operates within cofactor metabolism; pyridoxal 5'-phosphate salvage; pyridoxal 5'-phosphate from pyridoxamine 5'-phosphate: step 1/1. It functions in the pathway cofactor metabolism; pyridoxal 5'-phosphate salvage; pyridoxal 5'-phosphate from pyridoxine 5'-phosphate: step 1/1. Catalyzes the oxidation of either pyridoxine 5'-phosphate (PNP) or pyridoxamine 5'-phosphate (PMP) into pyridoxal 5'-phosphate (PLP). The sequence is that of Pyridoxine/pyridoxamine 5'-phosphate oxidase from Cereibacter sphaeroides (strain ATCC 17029 / ATH 2.4.9) (Rhodobacter sphaeroides).